Consider the following 150-residue polypeptide: D-aminoacyl-tRNA deacylase (150 aa).

Residues 138–139 carry the Gly-cisPro motif, important for rejection of L-amino acids motif; it reads GP.

This sequence belongs to the DTD family. As to quaternary structure, homodimer.

It localises to the cytoplasm. The catalysed reaction is glycyl-tRNA(Ala) + H2O = tRNA(Ala) + glycine + H(+). The enzyme catalyses a D-aminoacyl-tRNA + H2O = a tRNA + a D-alpha-amino acid + H(+). In terms of biological role, an aminoacyl-tRNA editing enzyme that deacylates mischarged D-aminoacyl-tRNAs. Also deacylates mischarged glycyl-tRNA(Ala), protecting cells against glycine mischarging by AlaRS. Acts via tRNA-based rather than protein-based catalysis; rejects L-amino acids rather than detecting D-amino acids in the active site. By recycling D-aminoacyl-tRNA to D-amino acids and free tRNA molecules, this enzyme counteracts the toxicity associated with the formation of D-aminoacyl-tRNA entities in vivo and helps enforce protein L-homochirality. In Salinibacter ruber (strain DSM 13855 / M31), this protein is D-aminoacyl-tRNA deacylase.